Here is a 606-residue protein sequence, read N- to C-terminus: 1-deoxy-D-xylulose-5-phosphate synthase (606 aa).

Thiamine diphosphate contacts are provided by residues H63 and 104-106 (GHS). D137 is a binding site for Mg(2+). Thiamine diphosphate contacts are provided by residues 138–139 (GS), N166, Y273, and E354. A Mg(2+)-binding site is contributed by N166.

Belongs to the transketolase family. DXPS subfamily. As to quaternary structure, homodimer. It depends on Mg(2+) as a cofactor. Thiamine diphosphate is required as a cofactor.

It catalyses the reaction D-glyceraldehyde 3-phosphate + pyruvate + H(+) = 1-deoxy-D-xylulose 5-phosphate + CO2. Its pathway is metabolic intermediate biosynthesis; 1-deoxy-D-xylulose 5-phosphate biosynthesis; 1-deoxy-D-xylulose 5-phosphate from D-glyceraldehyde 3-phosphate and pyruvate: step 1/1. Its function is as follows. Catalyzes the acyloin condensation reaction between C atoms 2 and 3 of pyruvate and glyceraldehyde 3-phosphate to yield 1-deoxy-D-xylulose-5-phosphate (DXP). This Sulfurimonas denitrificans (strain ATCC 33889 / DSM 1251) (Thiomicrospira denitrificans (strain ATCC 33889 / DSM 1251)) protein is 1-deoxy-D-xylulose-5-phosphate synthase.